Here is a 524-residue protein sequence, read N- to C-terminus: 2-isopropylmalate synthase (524 aa).

Positions 12–274 (VIIFDTTLRD…WNRIETTMLT (263 aa)) constitute a Pyruvate carboxyltransferase domain. Residues aspartate 21, histidine 209, histidine 211, and asparagine 245 each coordinate Mn(2+). Residues 398–524 (KLMSLTVIAG…EDAPAVAVAG (127 aa)) form a regulatory domain region.

Belongs to the alpha-IPM synthase/homocitrate synthase family. LeuA type 1 subfamily. As to quaternary structure, homodimer. The cofactor is Mn(2+).

It localises to the cytoplasm. The catalysed reaction is 3-methyl-2-oxobutanoate + acetyl-CoA + H2O = (2S)-2-isopropylmalate + CoA + H(+). Its pathway is amino-acid biosynthesis; L-leucine biosynthesis; L-leucine from 3-methyl-2-oxobutanoate: step 1/4. Functionally, catalyzes the condensation of the acetyl group of acetyl-CoA with 3-methyl-2-oxobutanoate (2-ketoisovalerate) to form 3-carboxy-3-hydroxy-4-methylpentanoate (2-isopropylmalate). This is 2-isopropylmalate synthase from Rhodopseudomonas palustris (strain ATCC BAA-98 / CGA009).